Reading from the N-terminus, the 666-residue chain is SNARE-interacting protein KEULE (666 aa).

Residues 340-377 (KNKAAQLQGKRDGAELSTRDLQKMVQALPQYSEQIDKL) adopt a coiled-coil conformation. A disordered region spans residues 534-589 (KEDFPCMNDPSPSFHGSTSLSSAASSSQGQAAQSMRSRRTPTWAKPRGSDDGYSSD). Over residues 550 to 568 (STSLSSAASSSQGQAAQSM) the composition is skewed to low complexity.

Belongs to the STXBP/unc-18/SEC1 family. Binds the syntaxin KNOLLE. Interacts with SEC6. Expressed throughout the plant, both in mitotically active and quiescent cells. Enriched in dividing tissues.

The protein resides in the cytoplasm. It is found in the membrane. The protein localises to the cytoskeleton. Its subcellular location is the phragmoplast. Its function is as follows. Regulator of vesicle trafficking involved in cytokinesis and root hair development, but not required for cell elongation. This chain is SNARE-interacting protein KEULE (KEU), found in Arabidopsis thaliana (Mouse-ear cress).